The following is a 445-amino-acid chain: Phosphoglucosamine mutase (445 aa).

The active-site Phosphoserine intermediate is Ser101. Mg(2+) contacts are provided by Ser101, Asp240, Asp242, and Asp244. The residue at position 101 (Ser101) is a Phosphoserine.

The protein belongs to the phosphohexose mutase family. Requires Mg(2+) as cofactor. Post-translationally, activated by phosphorylation.

The catalysed reaction is alpha-D-glucosamine 1-phosphate = D-glucosamine 6-phosphate. Functionally, catalyzes the conversion of glucosamine-6-phosphate to glucosamine-1-phosphate. This chain is Phosphoglucosamine mutase, found in Pseudomonas fluorescens (strain ATCC BAA-477 / NRRL B-23932 / Pf-5).